The chain runs to 179 residues: Serglycin (179 aa).

A signal peptide spans 1-26; the sequence is MRQVPVGTRLVLALAFVLVWGSSVQG. Residues 27–75 constitute a propeptide, activation peptide; sequence YPARRARYQWVRCKPDGIFANCIEEKGPRFDLIAEESNVGPPMTDPVLM. Cys-39 and Cys-48 are disulfide-bonded. The interval 86 to 145 is disordered; it reads SDDYSGSGSGSGSGSGSGSGSGSGSGSGSGSGSGSGSGSGSGSGSGSGSGSGSLADMEWE. Ser-90 and Ser-92 each carry an O-linked (Xyl...) (glycosaminoglycan) serine glycan. 24 repeat units span residues 90 to 91, 92 to 93, 94 to 95, 96 to 97, 98 to 99, 100 to 101, 102 to 103, 104 to 105, 106 to 107, 108 to 109, 110 to 111, 112 to 113, 114 to 115, 116 to 117, 118 to 119, 120 to 121, 122 to 123, 124 to 125, 126 to 127, 128 to 129, 130 to 131, 132 to 133, 134 to 135, and 136 to 137. The segment at 90-137 is 24 X 2 AA tandem repeats of S-G; sequence SGSGSGSGSGSGSGSGSGSGSGSGSGSGSGSGSGSGSGSGSGSGSGSG. Residues 92–136 show a composition bias toward gly residues; it reads SGSGSGSGSGSGSGSGSGSGSGSGSGSGSGSGSGSGSGSGSGSGS. Residues Ser-96, Ser-98, Ser-100, Ser-102, Ser-104, and Ser-106 are each glycosylated (O-linked (Xyl...) (glycosaminoglycan) serine).

Belongs to the serglycin family. In terms of assembly, binds to activated CD44 and to GZMB. O-glycosylated; contains chondroitin sulfate and heparan sulfate.

It localises to the cytoplasmic granule. Its subcellular location is the cytolytic granule. The protein localises to the secreted. The protein resides in the extracellular space. It is found in the golgi apparatus. In terms of biological role, plays a role in formation of mast cell secretory granules and mediates storage of various compounds in secretory vesicles. Required for storage of some proteases in both connective tissue and mucosal mast cells and for storage of granzyme B in T-lymphocytes. Plays a role in localizing neutrophil elastase in azurophil granules of neutrophils. Mediates processing of MMP2. Plays a role in cytotoxic cell granule-mediated apoptosis by forming a complex with granzyme B which is delivered to cells by perforin to induce apoptosis. Regulates the secretion of TNF-alpha and may also regulate protease secretion. Inhibits bone mineralization. The polypeptide is Serglycin (Srgn) (Rattus norvegicus (Rat)).